Reading from the N-terminus, the 439-residue chain is Ectonucleotide pyrophosphatase/phosphodiesterase family member 7 (439 aa).

A signal peptide spans 1 to 21; that stretch reads MGHSAVLLSVALVILPACVTG. The Extracellular portion of the chain corresponds to 22 to 422; sequence GPVQRQQQHK…RSGSPLSRQH (401 aa). 2 residues coordinate Zn(2+): aspartate 38 and threonine 74. Positions 71–77 are required for enzyme activity; sequence VTMTSPC. Catalysis depends on threonine 74, which acts as the Nucleophile. Asparagine 95 is a binding site for substrate. N-linked (GlcNAc...) asparagine glycosylation is found at asparagine 99, asparagine 120, asparagine 145, and asparagine 167. Zn(2+) is bound by residues aspartate 198, histidine 202, aspartate 245, and histidine 246. Asparagine 266 is a glycosylation site (N-linked (GlcNAc...) asparagine). Histidine 352 contacts Zn(2+). Residues 423–439 traverse the membrane as a helical segment; the sequence is HLVVVLMGILTGLAKVV.

This sequence belongs to the nucleotide pyrophosphatase/phosphodiesterase family. Zn(2+) serves as cofactor. In terms of processing, N-glycosylated; required for activity and transport to the plasma membrane. In terms of tissue distribution, detected in small intestine (at protein level). Highly expressed in the jejunum.

It localises to the cell membrane. The catalysed reaction is a sphingomyelin + H2O = phosphocholine + an N-acylsphing-4-enine + H(+). The enzyme catalyses a 1-O-alkyl-2-acetyl-sn-glycero-3-phosphocholine + H2O = a 1-O-alkyl-2-acetyl-sn-glycerol + phosphocholine + H(+). It carries out the reaction 1-O-octadecyl-2-acetyl-sn-glycero-3-phosphocholine + H2O = 1-O-octadecyl-2-acetyl-sn-glycerol + phosphocholine + H(+). It catalyses the reaction 1-hexadecanoyl-sn-glycero-3-phosphocholine + H2O = 1-hexadecanoyl-sn-glycerol + phosphocholine + H(+). Platelet-activating factor hydrolysis is inhibited by higher amount of sphingomyelin. The hydrolysis of platelet-activating factor and sphingomyelin can be inhibited by the presence of sphingomyelin and platelet-activating factor respectively, the inhibition of platelet-activating factor hydrolysis by sphingomyelin being stronger. PAF hydrolysis is dose-dependently increased by both taurocholate (TC) and taurodeoxycholate (TDC). Hydrolase activity against PAF is inhibited by EDTA and stimulated by 0.1-0.25 mM Zn2+. Choline-specific phosphodiesterase that hydrolyzes sphingomyelin (SM) releasing the ceramide and phosphocholine and therefore is involved in sphingomyelin digestion, ceramide formation, and fatty acid (FA) absorption in the gastrointestinal tract. Also has phospholipase C activity and can also cleave phosphocholine from palmitoyl lyso-phosphatidylcholine and platelet-activating factor (PAF) leading to its inactivation. Does not have nucleotide pyrophosphatase activity. May promote cholesterol absorption by affecting the levels of sphingomyelin derived from either diet or endogenous sources, in the intestinal lumen. This Rattus norvegicus (Rat) protein is Ectonucleotide pyrophosphatase/phosphodiesterase family member 7.